Here is a 427-residue protein sequence, read N- to C-terminus: Glutamate-1-semialdehyde 2,1-aminomutase (427 aa).

Residue Lys265 is modified to N6-(pyridoxal phosphate)lysine.

The protein belongs to the class-III pyridoxal-phosphate-dependent aminotransferase family. HemL subfamily. As to quaternary structure, homodimer. The cofactor is pyridoxal 5'-phosphate.

Its subcellular location is the cytoplasm. The catalysed reaction is (S)-4-amino-5-oxopentanoate = 5-aminolevulinate. It participates in porphyrin-containing compound metabolism; protoporphyrin-IX biosynthesis; 5-aminolevulinate from L-glutamyl-tRNA(Glu): step 2/2. This chain is Glutamate-1-semialdehyde 2,1-aminomutase, found in Burkholderia cenocepacia (strain HI2424).